The chain runs to 201 residues: IMP cyclohydrolase (201 aa).

Belongs to the archaeal IMP cyclohydrolase family.

The catalysed reaction is IMP + H2O = 5-formamido-1-(5-phospho-D-ribosyl)imidazole-4-carboxamide. It functions in the pathway purine metabolism; IMP biosynthesis via de novo pathway; IMP from 5-formamido-1-(5-phospho-D-ribosyl)imidazole-4-carboxamide: step 1/1. Catalyzes the cyclization of 5-formylamidoimidazole-4-carboxamide ribonucleotide to IMP. The polypeptide is IMP cyclohydrolase (Methanococcus maripaludis (strain C6 / ATCC BAA-1332)).